A 428-amino-acid chain; its full sequence is Glutamate-1-semialdehyde 2,1-aminomutase (428 aa).

Lys-265 carries the N6-(pyridoxal phosphate)lysine modification.

It belongs to the class-III pyridoxal-phosphate-dependent aminotransferase family. HemL subfamily. As to quaternary structure, homodimer. Pyridoxal 5'-phosphate is required as a cofactor.

The protein resides in the cytoplasm. It carries out the reaction (S)-4-amino-5-oxopentanoate = 5-aminolevulinate. It functions in the pathway porphyrin-containing compound metabolism; protoporphyrin-IX biosynthesis; 5-aminolevulinate from L-glutamyl-tRNA(Glu): step 2/2. This chain is Glutamate-1-semialdehyde 2,1-aminomutase, found in Proteus mirabilis (strain HI4320).